The primary structure comprises 326 residues: 4-hydroxythreonine-4-phosphate dehydrogenase (326 aa).

2 residues coordinate substrate: His-130 and Thr-131. His-160, His-205, and His-260 together coordinate a divalent metal cation. The substrate site is built by Lys-268, Asn-277, and Arg-286.

Belongs to the PdxA family. Homodimer. It depends on Zn(2+) as a cofactor. Mg(2+) is required as a cofactor. Requires Co(2+) as cofactor.

The protein resides in the cytoplasm. It catalyses the reaction 4-(phosphooxy)-L-threonine + NAD(+) = 3-amino-2-oxopropyl phosphate + CO2 + NADH. The protein operates within cofactor biosynthesis; pyridoxine 5'-phosphate biosynthesis; pyridoxine 5'-phosphate from D-erythrose 4-phosphate: step 4/5. In terms of biological role, catalyzes the NAD(P)-dependent oxidation of 4-(phosphooxy)-L-threonine (HTP) into 2-amino-3-oxo-4-(phosphooxy)butyric acid which spontaneously decarboxylates to form 3-amino-2-oxopropyl phosphate (AHAP). The polypeptide is 4-hydroxythreonine-4-phosphate dehydrogenase (Aromatoleum aromaticum (strain DSM 19018 / LMG 30748 / EbN1) (Azoarcus sp. (strain EbN1))).